The chain runs to 42 residues: Photosystem I reaction center subunit IX (42 aa).

The helical transmembrane segment at 7–27 (FLSLGPVLLVLWLSVQATLLI) threads the bilayer.

This sequence belongs to the PsaJ family.

The protein resides in the cellular thylakoid membrane. May help in the organization of the PsaE and PsaF subunits. This Gloeothece citriformis (strain PCC 7424) (Cyanothece sp. (strain PCC 7424)) protein is Photosystem I reaction center subunit IX.